Consider the following 374-residue polypeptide: Alcohol dehydrogenase class-3 (374 aa).

An N-acetylalanine modification is found at Ala2. Residues Cys45, His67, Cys97, Cys100, Cys103, Cys111, and Cys174 each contribute to the Zn(2+) site. At Lys233 the chain carries N6-succinyllysine. A Phosphoserine modification is found at Ser247. N6-succinyllysine is present on Lys315. Residues Ser324 and Ser351 each carry the phosphoserine modification.

Belongs to the zinc-containing alcohol dehydrogenase family. Class-III subfamily. As to quaternary structure, homodimer. The cofactor is Zn(2+). Ubiquitous.

The protein resides in the cytoplasm. The catalysed reaction is a primary alcohol + NAD(+) = an aldehyde + NADH + H(+). It catalyses the reaction a secondary alcohol + NAD(+) = a ketone + NADH + H(+). It carries out the reaction S-(hydroxymethyl)glutathione + NADP(+) = S-formylglutathione + NADPH + H(+). The enzyme catalyses S-(hydroxymethyl)glutathione + NAD(+) = S-formylglutathione + NADH + H(+). The catalysed reaction is 20-oxo-(5Z,8Z,11Z,14Z)-eicosatetraenoate + NAD(+) + H2O = (5Z,8Z,11Z,14Z)-eicosatetraenedioate + NADH + 2 H(+). It catalyses the reaction 20-hydroxy-(5Z,8Z,11Z,14Z)-eicosatetraenoate + NAD(+) = 20-oxo-(5Z,8Z,11Z,14Z)-eicosatetraenoate + NADH + H(+). It carries out the reaction S-nitrosoglutathione + NADH + H(+) = S-(hydroxysulfenamide)glutathione + NAD(+). In terms of biological role, catalyzes the oxidation of long-chain primary alcohols and the oxidation of S-(hydroxymethyl) glutathione. Also oxidizes long chain omega-hydroxy fatty acids, such as 20-HETE, producing both the intermediate aldehyde, 20-oxoarachidonate and the end product, a dicarboxylic acid, (5Z,8Z,11Z,14Z)-eicosatetraenedioate. Class-III ADH is remarkably ineffective in oxidizing ethanol. Required for clearance of cellular formaldehyde, a cytotoxic and carcinogenic metabolite that induces DNA damage. Also acts as a S-nitroso-glutathione reductase by catalyzing the NADH-dependent reduction of S-nitrosoglutathione, thereby regulating protein S-nitrosylation. The protein is Alcohol dehydrogenase class-3 of Mus musculus (Mouse).